The sequence spans 349 residues: Protein-arginine kinase (349 aa).

The Phosphagen kinase C-terminal domain occupies I24 to A252. ATP is bound by residues S27 to R31, H89, R123, R174 to M178, and R205 to E210. The RDXXRA motif of the pArg binding pocket involved in allosteric regulation motif lies at R335–A340.

The protein belongs to the ATP:guanido phosphotransferase family.

The catalysed reaction is L-arginyl-[protein] + ATP = N(omega)-phospho-L-arginyl-[protein] + ADP + H(+). Its activity is regulated as follows. Appears to be allosterically activated by the binding of pArg-containing polypeptides to the pArg-binding pocket localized in the C-terminal domain of McsB. Catalyzes the specific phosphorylation of arginine residues in proteins. The polypeptide is Protein-arginine kinase (Halothermothrix orenii (strain H 168 / OCM 544 / DSM 9562)).